The following is a 299-amino-acid chain: dTDP-4-dehydrorhamnose reductase (299 aa).

NADH contacts are provided by residues Gly-10–Val-12, Asp-30, Asp-39–Phe-40, and Ala-63–Thr-65. Gln-11 to Val-12 lines the NADPH pocket. NADPH contacts are provided by residues Asp-39–Phe-40, Ala-63–Thr-65, and Tyr-102. Thr-104–Asp-105 is a dTDP-beta-L-rhamnose binding site. NADH contacts are provided by Tyr-128 and Lys-132. 2 residues coordinate NADPH: Tyr-128 and Lys-132. Residue Tyr-128 is the Proton donor/acceptor of the active site. Position 153 (Trp-153) interacts with dTDP-beta-L-rhamnose.

This sequence belongs to the dTDP-4-dehydrorhamnose reductase family. In terms of assembly, homodimer. Requires Mg(2+) as cofactor.

The catalysed reaction is dTDP-beta-L-rhamnose + NADP(+) = dTDP-4-dehydro-beta-L-rhamnose + NADPH + H(+). It participates in carbohydrate biosynthesis; dTDP-L-rhamnose biosynthesis. Its pathway is bacterial outer membrane biogenesis; LPS O-antigen biosynthesis. In terms of biological role, involved in the biosynthesis of the dTDP-L-rhamnose which is an important component of lipopolysaccharide (LPS). Catalyzes the reduction of dTDP-6-deoxy-L-lyxo-4-hexulose to yield dTDP-L-rhamnose. RmlD uses NADH and NADPH nearly equally well. This Shigella flexneri protein is dTDP-4-dehydrorhamnose reductase.